The following is a 695-amino-acid chain: IQ domain-containing protein E (695 aa).

A disordered region spans residues 29–55; that stretch reads KAKRKAFHKPPPTSPKSPYLSKPRKVA. Coiled-coil stretches lie at residues 157 to 264, 292 to 358, and 387 to 477; these read LHVQ…RLQT, SALL…SSKS, and NKDH…CPEV. S322 carries the post-translational modification Phosphoserine. Disordered regions lie at residues 357–390, 465–521, 564–599, and 618–695; these read KSHA…NKDH, EMKK…RRDA, ASKA…TGSP, and RARH…NFPV. A compositionally biased stretch (basic and acidic residues) spans 465–482; that stretch reads EMKKEEKEDCPEVPHKAQ. IQ domains lie at 542 to 571 and 601 to 630; these read LDEA…HGSE and QEEA…RTTT.

As to quaternary structure, component of the EvC complex composed of EFCAB7, IQCE, EVC2 and EVC; built from two subcomplexes, EVC2:EVC and EFCAB7:IQCE. Interacts (via N-terminus) with EFCAB7 (via EF-hands 1 and 2); this interaction anchors the EVC-EVC2 complex in a signaling microdomain at the base of cilia and stimulates the Hedgehog (Hh) pathway. Interacts with EVC2 (via N-terminal end). Interacts with EVC.

It is found in the cell projection. It localises to the cilium membrane. Its function is as follows. Component of the EvC complex that positively regulates ciliary Hedgehog (Hh) signaling. Required for proper limb morphogenesis. The protein is IQ domain-containing protein E (IQCE) of Homo sapiens (Human).